The following is a 473-amino-acid chain: DNA-binding protein (473 aa).

2 disordered regions span residues 1–69 (MAGR…GFSH) and 85–111 (RRLEPKGVPPPSEENNEEEEPSTSKAV). Positions 7 to 18 (ELPTITPYLQET) are enriched in polar residues. Residues 53 to 62 (PDSEEEEEEV) show a composition bias toward acidic residues. A Phosphotyrosine; by host modification is found at tyrosine 141. The Zn(2+) site is built by cysteine 230 and histidine 232. Residues 243 to 277 (VEMDVASENAQRALKEHPSRAKVVQNRWGRSVVQL) are flexible loop. Zn(2+) contacts are provided by cysteine 285, cysteine 301, cysteine 342, cysteine 344, cysteine 396, and cysteine 412. The C-terminal arm, DBP binding stretch occupies residues 459–473 (VALPASHGDGEKEPF).

It belongs to the adenoviridae E2A DNA-binding protein family. In terms of assembly, homomultimerizes on viral ssDNA bound to pTP. Forms a initiation complex with viral polymerase, pTP and hosts NFIA and POU2F1/OCT1. Interacts with host SRCAP.

It is found in the host nucleus. Functionally, plays a role in the elongation phase of viral strand displacement replication by unwinding the template in an ATP-independent fashion, employing its capacity to form multimers. Also enhances the rate of initiation. Released from template upon second strand synthesis. Assembles in complex with viral pTP, viral pol, host NFIA and host POU2F1/OCT1 on viral origin of replication. Covers the whole ssDNA genome during synthesis. The complementary strand synthesis induces its relese from DNA template. May inhibit cellular transcription mediated by the interaction between host SRCAP and CBP. This Homo sapiens (Human) protein is DNA-binding protein.